The chain runs to 157 residues: uncharacterized protein (157 aa).

Positions 9-147 constitute an N-acetyltransferase domain; it reads LLINYKTLDE…DFYVWHPEVN (139 aa).

This is an uncharacterized protein from Bacillus cereus (strain 03BB102).